The sequence spans 154 residues: Myoglobin (154 aa).

Residues methionine 1 to alanine 147 form the Globin domain. Histidine 96 provides a ligand contact to heme b.

This sequence belongs to the globin family.

It is found in the cytoplasm. This Nippostrongylus brasiliensis (Rat hookworm) protein is Myoglobin (GLBB).